The chain runs to 199 residues: Ras-related protein Rab-7b (199 aa).

GTP contacts are provided by residues 15–22 (GAIGVGKT), 34–40 (YEEYQTT), 63–67 (DTGGQ), 124–127 (NKID), and 154–155 (AK). 2 short sequence motifs (switch) span residues 28-41 (YVHKTFYEEYQTTL) and 67-82 (QERFRSMVSTFYKGSD). Position 186 is a phosphoserine (S186). 2 S-geranylgeranyl cysteine lipidation sites follow: C198 and C199.

It belongs to the small GTPase superfamily. Rab family. In terms of tissue distribution, expressed in heart, placenta, lung, skeletal muscle and peripheral blood leukocyte.

The protein resides in the late endosome. The protein localises to the lysosome. Its subcellular location is the golgi apparatus. It localises to the trans-Golgi network. It is found in the cytoplasmic vesicle. The protein resides in the phagosome. The protein localises to the phagosome membrane. Its function is as follows. Controls vesicular trafficking from endosomes to the trans-Golgi network (TGN). Acts as a negative regulator of TLR9 signaling and can suppress TLR9-triggered TNFA, IL6, and IFNB production in macrophages by promoting TLR9 lysosomal degradation. Also negatively regulates TLR4 signaling in macrophages by promoting lysosomal degradation of TLR4. Promotes megakaryocytic differentiation by increasing NF-kappa-B-dependent IL6 production and subsequently enhancing the association of STAT3 with GATA1. Not involved in the regulation of the EGF- and EGFR degradation pathway. This is Ras-related protein Rab-7b (RAB7B) from Homo sapiens (Human).